Reading from the N-terminus, the 156-residue chain is Small ribosomal subunit protein uS7 (156 aa).

It belongs to the universal ribosomal protein uS7 family. In terms of assembly, part of the 30S ribosomal subunit. Contacts proteins S9 and S11.

One of the primary rRNA binding proteins, it binds directly to 16S rRNA where it nucleates assembly of the head domain of the 30S subunit. Is located at the subunit interface close to the decoding center, probably blocks exit of the E-site tRNA. The polypeptide is Small ribosomal subunit protein uS7 (Synechococcus sp. (strain CC9311)).